A 902-amino-acid chain; its full sequence is Viral-enhancing factor (902 aa).

Residues 27–330 enclose the Peptidase M60 domain; sequence HRRTEVGVVL…IFAWLYNPQR (304 aa). Residues N73, N265, N278, N339, N540, N593, N594, N620, N782, and N840 are each glycosylated (N-linked (GlcNAc...) asparagine; by host).

Its function is as follows. Involved in disruption of the peritrophic membrane and fusion of nucleocapsids with midgut cells. The protein is Viral-enhancing factor (VEF) of Heliothis (HaGV).